The sequence spans 378 residues: MKFPAFITAIISIASLSSAISVSGAAEGFAKGVTGGGSATPVYPSTISELVSYLKDSQPRVVVLTKTFDFRGSEGTTTGTGCAPWGTASNCQLAINKDNWCTNYQPNAPSASVSYDNAGVLGITITSDKTLIGQGSSGVIKGKGIRIVSGAKNVIIQNIAITDINPKYVWGGDAITLNNCDMVWIDHVTTARIGRQHLVLGTSASNRVTVSNSYFNGVSDYSATCNGYHYWGIYFAGSNDMVTLKGNYIYHMSGRSPKVQSNTLLHAVNNYWYDISGHAFEIGAGGYVLAEGNVFQNVPTILEEDDGQLFTSPNSNTNQVCSTYLGHVCQVNGFGSSGTFSSADTGFLVNFQGKNVASASAYTVAQSSVPSNAGQGKL.

The N-terminal stretch at 1 to 19 (MKFPAFITAIISIASLSSA) is a signal peptide. Intrachain disulfides connect Cys82/Cys101 and Cys91/Cys225. Arg255 is an active-site residue. The cysteines at positions 321 and 329 are disulfide-linked.

Belongs to the polysaccharide lyase 1 family.

Its subcellular location is the secreted. The enzyme catalyses Eliminative cleavage of (1-&gt;4)-alpha-D-galacturonan methyl ester to give oligosaccharides with 4-deoxy-6-O-methyl-alpha-D-galact-4-enuronosyl groups at their non-reducing ends.. Pectinolytic enzymes consist of four classes of enzymes: pectin lyase, polygalacturonase, pectin methylesterase and rhamnogalacturonase. Among pectinolytic enzymes, pectin lyase is the most important in depolymerization of pectin, since it cleaves internal glycosidic bonds of highly methylated pectins. This chain is Probable pectin lyase A (pelA), found in Aspergillus terreus (strain NIH 2624 / FGSC A1156).